A 274-amino-acid chain; its full sequence is 2,3,4,5-tetrahydropyridine-2,6-dicarboxylate N-succinyltransferase (274 aa).

Substrate contacts are provided by Arg-104 and Asp-141.

This sequence belongs to the transferase hexapeptide repeat family. As to quaternary structure, homotrimer.

Its subcellular location is the cytoplasm. The catalysed reaction is (S)-2,3,4,5-tetrahydrodipicolinate + succinyl-CoA + H2O = (S)-2-succinylamino-6-oxoheptanedioate + CoA. Its pathway is amino-acid biosynthesis; L-lysine biosynthesis via DAP pathway; LL-2,6-diaminopimelate from (S)-tetrahydrodipicolinate (succinylase route): step 1/3. The polypeptide is 2,3,4,5-tetrahydropyridine-2,6-dicarboxylate N-succinyltransferase (Wigglesworthia glossinidia brevipalpis).